The primary structure comprises 361 residues: Phosphoserine aminotransferase (361 aa).

Arg-42 provides a ligand contact to L-glutamate. Pyridoxal 5'-phosphate-binding positions include 76 to 77 (AR), Trp-102, Thr-153, Asp-173, and Gln-196. Lys-197 is modified (N6-(pyridoxal phosphate)lysine). 238 to 239 (NT) contributes to the pyridoxal 5'-phosphate binding site.

The protein belongs to the class-V pyridoxal-phosphate-dependent aminotransferase family. SerC subfamily. In terms of assembly, homodimer. Pyridoxal 5'-phosphate is required as a cofactor.

The protein localises to the cytoplasm. It catalyses the reaction O-phospho-L-serine + 2-oxoglutarate = 3-phosphooxypyruvate + L-glutamate. The enzyme catalyses 4-(phosphooxy)-L-threonine + 2-oxoglutarate = (R)-3-hydroxy-2-oxo-4-phosphooxybutanoate + L-glutamate. It functions in the pathway amino-acid biosynthesis; L-serine biosynthesis; L-serine from 3-phospho-D-glycerate: step 2/3. Its pathway is cofactor biosynthesis; pyridoxine 5'-phosphate biosynthesis; pyridoxine 5'-phosphate from D-erythrose 4-phosphate: step 3/5. Catalyzes the reversible conversion of 3-phosphohydroxypyruvate to phosphoserine and of 3-hydroxy-2-oxo-4-phosphonooxybutanoate to phosphohydroxythreonine. The polypeptide is Phosphoserine aminotransferase (Yersinia pestis bv. Antiqua (strain Angola)).